A 580-amino-acid chain; its full sequence is Negative elongation factor B (580 aa).

Position 519 is an N6-acetyllysine (K519). Residues 548-580 (LEQLDHRKPSPAQAAETPALELPLPSVPAPAPL) form a disordered region. At S557 the chain carries Phosphoserine.

The protein belongs to the NELF-B family. In terms of assembly, the NELF complex is composed of NELFA, NELFB, NELFCD (isoform NELF-C or isoform NELF-D) and NELFE; the N-terminus of NELFB binds to the NELFA:NELFCD subcomplex. Binds RNA which may help to stabilize the NELF complex on nucleic acid. Interacts with the first BRCT repeat of BRCA1. Interacts with KIAA1191. Interacts with NELFE. As to expression, widely expressed. Expressed in heart, brain, lung, placenta, liver, skeletal muscle, kidney and pancreas.

The protein localises to the nucleus. Functionally, essential component of the NELF complex, a complex that negatively regulates the elongation of transcription by RNA polymerase II. The NELF complex, which acts via an association with the DSIF complex and causes transcriptional pausing, is counteracted by the P-TEFb kinase complex. May be able to induce chromatin unfolding. Essential for early embryogenesis; plays an important role in maintaining the undifferentiated state of embryonic stem cells (ESCs) by preventing unscheduled expression of developmental genes. Plays a key role in establishing the responsiveness of stem cells to developmental cues; facilitates plasticity and cell fate commitment in ESCs by establishing the appropriate expression level of signaling molecules. Supports the transcription of genes involved in energy metabolism in cardiomyocytes; facilitates the association of transcription initiation factors with the promoters of the metabolism-related genes. (Microbial infection) The NELF complex is involved in HIV-1 latency possibly involving recruitment of PCF11 to paused RNA polymerase II. In vitro, binds weakly to the HIV-1 TAR RNA which is located in the long terminal repeat (LTR) of HIV-1. The sequence is that of Negative elongation factor B (NELFB) from Homo sapiens (Human).